We begin with the raw amino-acid sequence, 445 residues long: E3 ubiquitin-protein ligase pellino homolog 3 (445 aa).

Positions 1-24 (MVLEGNPDVGSPRTSDLQHPGSQG) are disordered. Ser11 is subject to Phosphoserine. Polar residues predominate over residues 12-24 (PRTSDLQHPGSQG).

Belongs to the pellino family. Interacts with TRAF6, MAP3K14 and MAP3K7. In terms of processing, phosphorylated by IRAK1 enhancing its E3 ligase activity.

The enzyme catalyses S-ubiquitinyl-[E2 ubiquitin-conjugating enzyme]-L-cysteine + [acceptor protein]-L-lysine = [E2 ubiquitin-conjugating enzyme]-L-cysteine + N(6)-ubiquitinyl-[acceptor protein]-L-lysine.. The protein operates within protein modification; protein ubiquitination. E3 ubiquitin ligase catalyzing the covalent attachment of ubiquitin moieties onto substrate proteins. Involved in the TLR and IL-1 signaling pathways via interaction with the complex containing IRAK kinases and TRAF6. Mediates 'Lys-63'-linked polyubiquitination of IRAK1. Can activate AP1/JUN and ELK1. Acts as a regulator of innate immunity by mediating 'Lys-63'-linked polyubiquitination of RIPK2 downstream of NOD1 and NOD2, thereby transforming RIPK2 into a scaffolding protein for downstream effectors, ultimately leading to activation of the NF-kappa-B and MAP kinases signaling. Catalyzes 'Lys-63'-linked polyubiquitination of RIPK2 in parallel of XIAP. The sequence is that of E3 ubiquitin-protein ligase pellino homolog 3 from Mus musculus (Mouse).